The primary structure comprises 101 residues: CYC02 protein (101 aa).

The 1; approximate repeat unit spans residues 42–64; that stretch reads DAVCHHGCCRWFHHRCVRCCRSA. A 2 X approximate repeats region spans residues 42 to 101; sequence DAVCHHGCCRWFHHRCVRCCRSAEEVSVSDTENNAAADAHCRHGCCRWFHGRCIRCCPSA. The stretch at 79-101 is one 2; approximate repeat; sequence DAHCRHGCCRWFHGRCIRCCPSA.

It belongs to the GRP family.

In terms of biological role, may be involved in the control of the cell cycle at the G1/S start transition. The protein is CYC02 protein (CYC02) of Catharanthus roseus (Madagascar periwinkle).